We begin with the raw amino-acid sequence, 22 residues long: Thylakoid lumenal 11 kDa protein (22 aa).

The tract at residues phenylalanine 1 to phenylalanine 22 is disordered.

This sequence to A.thaliana At2g44920.

It localises to the plastid. The protein resides in the chloroplast thylakoid lumen. This Spinacia oleracea (Spinach) protein is Thylakoid lumenal 11 kDa protein.